The chain runs to 370 residues: 3-isopropylmalate dehydrogenase 2 (370 aa).

Residue 77–90 coordinates NAD(+); that stretch reads GPKWDAVPYEVRPE. Substrate contacts are provided by R97, R107, R135, and D226. Mg(2+)-binding residues include D226, D250, and D254. 290 to 302 contacts NAD(+); the sequence is GSAPDIAGKGLAN.

The protein belongs to the isocitrate and isopropylmalate dehydrogenases family. LeuB type 1 subfamily. As to quaternary structure, homodimer. The cofactor is Mg(2+). Mn(2+) serves as cofactor.

It localises to the cytoplasm. The enzyme catalyses (2R,3S)-3-isopropylmalate + NAD(+) = 4-methyl-2-oxopentanoate + CO2 + NADH. It participates in amino-acid biosynthesis; L-leucine biosynthesis; L-leucine from 3-methyl-2-oxobutanoate: step 3/4. Catalyzes the oxidation of 3-carboxy-2-hydroxy-4-methylpentanoate (3-isopropylmalate) to 3-carboxy-4-methyl-2-oxopentanoate. The product decarboxylates to 4-methyl-2 oxopentanoate. This Bradyrhizobium diazoefficiens (strain JCM 10833 / BCRC 13528 / IAM 13628 / NBRC 14792 / USDA 110) protein is 3-isopropylmalate dehydrogenase 2.